We begin with the raw amino-acid sequence, 116 residues long: Peptidyl-tRNA hydrolase (116 aa).

The protein belongs to the PTH2 family.

The protein localises to the cytoplasm. The enzyme catalyses an N-acyl-L-alpha-aminoacyl-tRNA + H2O = an N-acyl-L-amino acid + a tRNA + H(+). The natural substrate for this enzyme may be peptidyl-tRNAs which drop off the ribosome during protein synthesis. In Methanococcus vannielii (strain ATCC 35089 / DSM 1224 / JCM 13029 / OCM 148 / SB), this protein is Peptidyl-tRNA hydrolase.